A 603-amino-acid chain; its full sequence is uncharacterized protein (603 aa).

The region spanning 4 to 79 (YRIRVTTVDQ…VTFHLVIAVF (76 aa)) is the Ubiquitin-like domain. 3 disordered regions span residues 85–121 (TLPSATSSSVPQSRTSELSSTNSIPTPRITSLNPEEL), 159–178 (SLPTHEQSSPVAESLDNSVS), and 206–348 (AQES…NQPF). 2 stretches are compositionally biased toward polar residues: residues 94–117 (VPQSRTSELSSTNSIPTPRITSLN) and 162–178 (THEQSSPVAESLDNSVS). The span at 219 to 231 (SSSSAPLASDQSP) shows a compositional bias: low complexity. Over residues 246–264 (LGSNSGLNPRSPNSFSSPL) the composition is skewed to polar residues. A compositionally biased stretch (low complexity) spans 280-289 (SLSPLSNSSS). The span at 290–314 (INQVHQNETHGSTISVPNPNLSQMG) shows a compositional bias: polar residues. Over residues 315–329 (PSHSSSVPSNLSPNP) the composition is skewed to low complexity. The segment covering 330–348 (AQNENPSTTSIPSINNQPF) has biased composition (polar residues). Residues 496-516 (ILLTSIMSVVFLLQTGALAPF) traverse the membrane as a helical segment. A disordered region spans residues 544-578 (TAQRVVEIPNETQTEDEQDGTNTPDNRADAEEREL). T566 is modified (phosphothreonine). The span at 569–578 (NRADAEEREL) shows a compositional bias: basic and acidic residues.

It is found in the endoplasmic reticulum membrane. This is an uncharacterized protein from Schizosaccharomyces pombe (strain 972 / ATCC 24843) (Fission yeast).